A 626-amino-acid polypeptide reads, in one-letter code: Polygalacturonase 1 beta-like protein 3 (626 aa).

Positions 1 to 23 (MLKQFLLLQSFSFFLFNVVIVGG) are cleaved as a signal peptide. Residues 117-120 (FSVY) form an FXXY 1 repeat. N-linked (GlcNAc...) asparagine glycosylation occurs at N124. FXXY repeat units lie at residues 125–128 (FTNY), 139–142 (FKNY), 153–156 (FRRY), 167–170 (FTVY), 181–184 (FNSY), 195–198 (FTNY), 209–212 (FTAY), 223–226 (FKTY), 238–241 (FTSY), 252–255 (FTSY), and 266–269 (FSNY). N141 carries an N-linked (GlcNAc...) asparagine glycan. N277 is a glycosylation site (N-linked (GlcNAc...) asparagine). 7 FXXY repeats span residues 280–283 (FTSY), 294–297 (FNNY), 308–311 (FANY), 322–325 (FSSY), 336–339 (FVNY), 350–353 (FTGY), and 364–367 (FKTY). N-linked (GlcNAc...) asparagine glycosylation occurs at N370. FXXY repeat units lie at residues 373–376 (FKDY) and 383–386 (FAKY). N-linked (GlcNAc...) asparagine glycans are attached at residues N387 and N465. The region spanning 411 to 625 (FFRESSLKEG…FENDMNWAIA (215 aa)) is the BURP domain.

In terms of tissue distribution, expressed in flowers and stems. Detected in trichomes, guard cells, root vascular tissue, root hairs, pollen sacs, sepals and styles of pistils.

It localises to the secreted. The protein localises to the extracellular space. The protein resides in the apoplast. Its subcellular location is the cell wall. Functionally, involved in cell size determination. May serve as a chaperone for expansins through the secretory pathway. The protein is Polygalacturonase 1 beta-like protein 3 of Arabidopsis thaliana (Mouse-ear cress).